Consider the following 858-residue polypeptide: Respiratory burst oxidase homolog protein D (858 aa).

Over residues 1–13 the composition is skewed to basic and acidic residues; the sequence is MQNPEDHHSDREL. Residues 1-27 are disordered; the sequence is MQNPEDHHSDRELSSPSNTTKSNDDKN. At 1–318 the chain is on the cytoplasmic side; that stretch reads MQNPEDHHSD…KYFLLDNWRR (318 aa). EF-hand-like regions lie at residues 134–144 and 171–182; these read TATSDSLLPRA and RNITSGCISKEQ. EF-hand domains are found at residues 194–229 and 238–273; these read SFDS…SASA and QAAE…APIQ. The Ca(2+) site is built by Asp-207, Asp-209, Asp-211, Arg-213, and Glu-218. Residues 319–339 traverse the membrane as a helical segment; that stretch reads VWVLLLWIGVMAGLFAYKYVQ. The Extracellular portion of the chain corresponds to 340–351; that stretch reads YKNKAAFNVMGH. The chain crosses the membrane as a helical span at residues 352–372; the sequence is CVCVAKGAAEVLKLNMALILL. One can recognise a Ferric oxidoreductase domain in the interval 357–514; it reads KGAAEVLKLN…LFVIVYSLLI (158 aa). Over 373–397 the chain is Cytoplasmic; the sequence is PVCRNTITWLRNKTKLGGAVPFDDN. A helical membrane pass occupies residues 398–418; it reads INFHKVVAGAIAVGVGIHVLA. Residues 419–454 lie on the Extracellular side of the membrane; the sequence is HMTCDFPRLLNASPEKYKPMEPYFGDQPRNYWHFVK. A helical membrane pass occupies residues 455–475; that stretch reads GVEGVSGIIMVVLMSIAFTLA. Topologically, residues 476–497 are cytoplasmic; it reads SQRFRRNKIRLPRPLNKLTGFN. The chain crosses the membrane as a helical span at residues 498-518; it reads AFWYSHHLFVIVYSLLIVHGI. At 519-675 the chain is on the extracellular side; that stretch reads ELYLTKEWYK…APAQDYKEYE (157 aa). Residues 548–670 form the FAD-binding FR-type domain; the sequence is LRAFRSSVKD…DGPYGAPAQD (123 aa). The helical transmembrane segment at 676–696 threads the bilayer; that stretch reads VLLLVGLGIGATPMISIVKDI. Topologically, residues 697-858 are cytoplasmic; that stretch reads VNNMKEEKYD…TKFDFHKENF (162 aa).

It belongs to the RBOH (TC 5.B.1.3) family. As to quaternary structure, monomer and homodimer. Post-translationally, phosphorylated by CPK. As to expression, expressed in leaves.

The protein localises to the membrane. In terms of biological role, calcium-dependent NADPH oxidase that generates superoxide. May be responsible for the oxidative burst in response to pathogen attack in the leaves. The chain is Respiratory burst oxidase homolog protein D (RBOHD) from Solanum tuberosum (Potato).